The primary structure comprises 562 residues: Abrin-c (562 aa).

An N-terminal signal peptide occupies residues 1 to 34; sequence MDKTLKLLILCLAWTCSFSALRCAARTYPPVATN. Gln-35 is subject to Pyrrolidone carboxylic acid. Glu-198 is an active-site residue. A glycan (N-linked (GlcNAc...) asparagine) is linked at Asn-234. Disulfide bonds link Cys-281–Cys-303, Cys-320–Cys-339, and Cys-363–Cys-380. Positions 307 to 434 constitute a Ricin B-type lectin 1 domain; the sequence is YEPTVRIGGR…YLMRQGWRTG (128 aa). The 1-alpha repeat unit spans residues 317–359; that stretch reads DGMCVDVYDDGYHNGNRIIAWKCKDRLEENQLWTLKSDKTIRS. The stretch at 360-400 is one 1-beta repeat; the sequence is NGKCLTTEGYAPGNYVMIYDCTSAVAEATYWEIWDNGTIIN. Asn-395 and Asn-435 each carry an N-linked (GlcNAc...) asparagine glycan. Residues 403 to 435 form a 1-gamma repeat; sequence SALVLSAESSSMGGTLTVQTNEYLMRQGWRTGN. Positions 437-561 constitute a Ricin B-type lectin 2 domain; sequence TSPFVTSISG…GKPNQIWLTL (125 aa). A 2-alpha repeat occupies 448–483; that stretch reads SDLCMQAQGSNVWLADCDNNKKEQQWALYTDGSIRS. 2 cysteine pairs are disulfide-bonded: Cys-451-Cys-464 and Cys-490-Cys-507. Residues 487–526 form a 2-beta repeat; the sequence is TNNCLTSKDHKQGSPIVLMACSNGWASQRWLFKNDGSIYN. The 2-gamma repeat unit spans residues 529–562; it reads DDMVMDVKRSDPSLKEIILHPYHGKPNQIWLTLF.

This sequence in the N-terminal section; belongs to the ribosome-inactivating protein family. Type 2 RIP subfamily. In terms of assembly, disulfide-linked dimer of A and B chains.

The enzyme catalyses Endohydrolysis of the N-glycosidic bond at one specific adenosine on the 28S rRNA.. In terms of biological role, the A chain is responsible for inhibiting protein synthesis through the catalytic inactivation of 60S ribosomal subunits by removing adenine from position 4,324 of 28S rRNA. Abrin-a is more toxic than ricin. Functionally, the B chain is a galactose-specific lectin that facilitates the binding of abrin to the cell membrane that precedes endocytosis. The chain is Abrin-c from Abrus precatorius (Indian licorice).